We begin with the raw amino-acid sequence, 475 residues long: Transcription factor EB (475 aa).

The disordered stretch occupies residues 1–52; that stretch reads MASRIGLRMQLMREQAQQEEQRERMQQQAVMHYMQQQQQQQQQLGGPPTPAI. The segment at 1–166 is interaction with ACSS2; sequence MASRIGLRMQ…DDVIDNIMRL (166 aa). Residues 26 to 43 show a composition bias toward low complexity; the sequence is QQQAVMHYMQQQQQQQQQ. A phosphoserine mark is found at S108, S113, S121, and S137. Positions 135–152 match the Nuclear export signal motif; the sequence is GNSAPNSPMAMLHISSNP. S141 carries the phosphoserine; by MTOR modification. A strong transcription activation domain region spans residues 155–164; it reads EFDDVIDNIM. T182 is modified (phosphothreonine). S210 is modified (phosphoserine; by MTOR). C211 carries the post-translational modification S-(2,3-dicarboxypropyl)cysteine. The region spanning 234 to 287 is the bHLH domain; that stretch reads QKKDNHNLIERRRRFNINDRIKELGMLIPKANDLDVRWNKGTILKASVDYIRRM. The Nuclear localization signal motif lies at 244 to 247; it reads RRRR. Residues 297-318 are leucine-zipper; that stretch reads LENHSRRLEMTNKQLWLRIQEL. The residue at position 331 (S331) is a Phosphoserine. The segment at 351-429 is disordered; sequence SEDGPGEALM…HGSPFPNLSK (79 aa). Residues 380–389 show a composition bias toward low complexity; sequence LPSAAQPQSP. 5 positions are modified to phosphoserine: S422, S440, S465, S466, and S468. Positions 445–468 are enriched in low complexity; it reads ASDPLFSTMSPEASKASSRRSSFS. Residues 445 to 475 form a disordered region; sequence ASDPLFSTMSPEASKASSRRSSFSMEEGDVL.

It belongs to the MiT/TFE family. In terms of assembly, homodimer and heterodimer; with TFE3 or MITF. Interacts (when phosphorylated by MTOR) with YWHAZ; promoting retention in the cytosol. Interacts with Irgm1; promoting association between TFEB and PPP3CB and dephosphorylation. Interacts with small GTPases Rag (RagA/RRAGA, RagB/RRAGB, RagC/RRAGC and/or RagD/RRAGD); promoting its recruitment to lysosomal membrane in the presence of nutrients. Interacts with ACSS2. Phosphorylation at Ser-210 by MTOR via non-canonical mTORC1 pathway regulates its subcellular location and activity. When nutrients are present, phosphorylation by MTOR promotes association with 14-3-3/YWHA adapters and retention in the cytosol. Inhibition of mTORC1, starvation and lysosomal disruption, promotes dephosphorylation by calcineurin PPP3CB and translocation to the nucleus. Dephosphorylated by calcineurin PPP3CB in response to lysosomal Ca(2+) release. Irgm1 promotes dephosphorylation by calcineurin PPP3CB, resulting in TFEB nuclear translocation and stimulation of lysosomal biogenesis. Exported from the nucleus in a mTORC1-dependent manner in response to nutrient availability. In terms of processing, alkylated via a non-enzymatic covalent modification. Itaconate, an anti-inflammatory metabolite generated in response to lipopolysaccharide, alkylates Cys-211, preventing association with 14-3-3/YWHA adapters, thereby promoting nuclear translocation and activity. Post-translationally, sumoylated; does not affect dimerization with MITF. In terms of tissue distribution, widely expressed.

It localises to the nucleus. The protein localises to the cytoplasm. It is found in the cytosol. The protein resides in the lysosome membrane. Functionally, transcription factor that acts as a master regulator of lysosomal biogenesis, autophagy, lysosomal exocytosis, lipid catabolism, energy metabolism and immune response. Specifically recognizes and binds E-box sequences (5'-CANNTG-3'); efficient DNA-binding requires dimerization with itself or with another MiT/TFE family member such as TFE3 or MITF. Involved in the cellular response to amino acid availability by acting downstream of MTOR: in the presence of nutrients, TFEB phosphorylation by MTOR promotes its cytosolic retention and subsequent inactivation. Upon starvation or lysosomal stress, inhibition of MTOR induces TFEB dephosphorylation, resulting in nuclear localization and transcription factor activity. Specifically recognizes and binds the CLEAR-box sequence (5'-GTCACGTGAC-3') present in the regulatory region of many lysosomal genes, leading to activate their expression, thereby playing a central role in expression of lysosomal genes. Regulates lysosomal positioning in response to nutrient deprivation by promoting the expression of PIP4P1. Acts as a positive regulator of autophagy by promoting expression of genes involved in autophagy. In association with TFE3, activates the expression of CD40L in T-cells, thereby playing a role in T-cell-dependent antibody responses in activated CD4(+) T-cells and thymus-dependent humoral immunity. Specifically recognizes the gamma-E3 box, a subset of E-boxes, present in the heavy-chain immunoglobulin enhancer. Plays a role in the signal transduction processes required for normal vascularization of the placenta. Involved in the immune response to infection by the bacteria S.aureus, S.typhimurium or S.enterica. Infection promotes itaconate production, leading to alkylation, resulting in nuclear localization and transcription factor activity. Itaconate-mediated alkylation activates TFEB-dependent lysosomal biogenesis, facilitating the bacteria clearance during the antibacterial innate immune response. In association with ACSS2, promotes the expression of genes involved in lysosome biogenesis and both autophagy upon glucose deprivation. In Mus musculus (Mouse), this protein is Transcription factor EB.